Here is a 239-residue protein sequence, read N- to C-terminus: Norbelladine 4'-O-methyltransferase (239 aa).

S-adenosyl-L-methionine contacts are provided by residues V55, E77, 79 to 80 (GV), S85, D103, and A132. D155 contributes to the a divalent metal cation binding site. D157 provides a ligand contact to S-adenosyl-L-methionine. A divalent metal cation is bound by residues D181 and N182.

Belongs to the class I-like SAM-binding methyltransferase superfamily. Cation-dependent O-methyltransferase family. The cofactor is Mg(2+). As to expression, highly expressed in bulbs. Detected in leaves and inflorescences.

The enzyme catalyses norbelladine + S-adenosyl-L-methionine = 4'-O-methylnorbelladine + S-adenosyl-L-homocysteine + H(+). The protein operates within alkaloid biosynthesis. Its function is as follows. 4'-O-methyltransferase converting norbelladine to 4'-O-methylnorbelladine. 4'-O-methylnorbelladine is a precursor to all Amaryllidaceae alkaloids such as galanthamine, lycorine and haemanthamine, and including haemanthamine- and crinamine-type alkaloids, promising anticancer agents. Can use norbelladine, N-methylnorbelladine and dopamine as substrate, but not caffeic acid, vanillin, 3,4-dihydroxybenzaldehyde and tyramine. The sequence is that of Norbelladine 4'-O-methyltransferase from Narcissus aff. pseudonarcissus MK-2014 (Daffodil).